Consider the following 451-residue polypeptide: tRNA-2-methylthio-N(6)-dimethylallyladenosine synthase (451 aa).

An MTTase N-terminal domain is found at 6–122 (RRYHIITFGC…LDQLLEQVWA (117 aa)). 6 residues coordinate [4Fe-4S] cluster: C15, C51, C85, C157, C161, and C164. Residues 143–384 (RESTVSAWVN…STQAMERSQR (242 aa)) form the Radical SAM core domain. The region spanning 383–447 (QRYLGRVEEV…AFSLTGEALS (65 aa)) is the TRAM domain.

Belongs to the methylthiotransferase family. MiaB subfamily. In terms of assembly, monomer. It depends on [4Fe-4S] cluster as a cofactor.

Its subcellular location is the cytoplasm. It catalyses the reaction N(6)-dimethylallyladenosine(37) in tRNA + (sulfur carrier)-SH + AH2 + 2 S-adenosyl-L-methionine = 2-methylsulfanyl-N(6)-dimethylallyladenosine(37) in tRNA + (sulfur carrier)-H + 5'-deoxyadenosine + L-methionine + A + S-adenosyl-L-homocysteine + 2 H(+). Its function is as follows. Catalyzes the methylthiolation of N6-(dimethylallyl)adenosine (i(6)A), leading to the formation of 2-methylthio-N6-(dimethylallyl)adenosine (ms(2)i(6)A) at position 37 in tRNAs that read codons beginning with uridine. This chain is tRNA-2-methylthio-N(6)-dimethylallyladenosine synthase, found in Synechocystis sp. (strain ATCC 27184 / PCC 6803 / Kazusa).